A 369-amino-acid polypeptide reads, in one-letter code: Chaperone protein DnaJ (369 aa).

A J domain is found at 7–73; it reads DYYEILGVPR…QKRAMYDRFG (67 aa). The CR-type zinc-finger motif lies at 143 to 225; it reads GAEIPVEYER…CGGSGRVLRK (83 aa). C156, C159, C173, C176, C199, C202, C213, and C216 together coordinate Zn(2+). CXXCXGXG motif repeat units follow at residues 156–163, 173–180, 199–206, and 213–220; these read CPRCGGTG, CPSCGGTG, CERCGGTG, and CHECGGSG.

The protein belongs to the DnaJ family. In terms of assembly, homodimer. Requires Zn(2+) as cofactor.

It is found in the cytoplasm. Functionally, participates actively in the response to hyperosmotic and heat shock by preventing the aggregation of stress-denatured proteins and by disaggregating proteins, also in an autonomous, DnaK-independent fashion. Unfolded proteins bind initially to DnaJ; upon interaction with the DnaJ-bound protein, DnaK hydrolyzes its bound ATP, resulting in the formation of a stable complex. GrpE releases ADP from DnaK; ATP binding to DnaK triggers the release of the substrate protein, thus completing the reaction cycle. Several rounds of ATP-dependent interactions between DnaJ, DnaK and GrpE are required for fully efficient folding. Also involved, together with DnaK and GrpE, in the DNA replication of plasmids through activation of initiation proteins. This is Chaperone protein DnaJ from Thermotoga petrophila (strain ATCC BAA-488 / DSM 13995 / JCM 10881 / RKU-1).